The sequence spans 303 residues: Quinolinate synthase (303 aa).

The iminosuccinate site is built by histidine 24 and serine 41. Cysteine 86 lines the [4Fe-4S] cluster pocket. Residues 112 to 114 and serine 129 contribute to the iminosuccinate site; that span reads YIN. Cysteine 172 contributes to the [4Fe-4S] cluster binding site. Iminosuccinate contacts are provided by residues 198–200 and threonine 215; that span reads HPE. A [4Fe-4S] cluster-binding site is contributed by cysteine 260.

Belongs to the quinolinate synthase family. Type 2 subfamily. The cofactor is [4Fe-4S] cluster.

It localises to the cytoplasm. The catalysed reaction is iminosuccinate + dihydroxyacetone phosphate = quinolinate + phosphate + 2 H2O + H(+). It functions in the pathway cofactor biosynthesis; NAD(+) biosynthesis; quinolinate from iminoaspartate: step 1/1. Its function is as follows. Catalyzes the condensation of iminoaspartate with dihydroxyacetone phosphate to form quinolinate. This chain is Quinolinate synthase, found in Caldicellulosiruptor saccharolyticus (strain ATCC 43494 / DSM 8903 / Tp8T 6331).